The following is a 570-amino-acid chain: Urease subunit alpha (570 aa).

In terms of domain architecture, Urease spans 132–570 (GGFDSHIHYI…LPLAQRYFLF (439 aa)). The Ni(2+) site is built by histidine 137, histidine 139, and lysine 220. The residue at position 220 (lysine 220) is an N6-carboxylysine. Histidine 222 lines the substrate pocket. Positions 249 and 275 each coordinate Ni(2+). Catalysis depends on histidine 323, which acts as the Proton donor. Aspartate 363 provides a ligand contact to Ni(2+).

It belongs to the metallo-dependent hydrolases superfamily. Urease alpha subunit family. Heterotrimer of UreA (gamma), UreB (beta) and UreC (alpha) subunits. Three heterotrimers associate to form the active enzyme. Requires Ni cation as cofactor. In terms of processing, carboxylation allows a single lysine to coordinate two nickel ions.

Its subcellular location is the cytoplasm. It catalyses the reaction urea + 2 H2O + H(+) = hydrogencarbonate + 2 NH4(+). It participates in nitrogen metabolism; urea degradation; CO(2) and NH(3) from urea (urease route): step 1/1. The polypeptide is Urease subunit alpha (Ruegeria sp. (strain TM1040) (Silicibacter sp.)).